A 156-amino-acid chain; its full sequence is Snaclec jerdonibitin subunit alpha (156 aa).

Residues Met-1 to Ala-23 form the signal peptide. 3 disulfides stabilise this stretch: Cys-25–Cys-36, Cys-53–Cys-150, and Cys-125–Cys-142. In terms of domain architecture, C-type lectin spans Phe-32–Lys-151.

The protein belongs to the snaclec family. As to quaternary structure, heterodimer of subunits alpha and beta; disulfide-linked. In terms of tissue distribution, expressed by the venom gland.

The protein localises to the secreted. Functionally, snaclec that dose-dependently inhibits platelet aggregation induced by ristocetin or low-dose thrombin, but not by high-dose thrombin. Binds to GPIbalpha (GP1BA). In vivo, also dose-dependently induces thrombocytopenia of mice and platelet counts remains at very low level even after 18 hours intravenous injection. This is Snaclec jerdonibitin subunit alpha from Protobothrops jerdonii (Jerdon's pitviper).